Reading from the N-terminus, the 383-residue chain is 3-dehydroquinate synthase (383 aa).

NAD(+)-binding positions include 81–86 (EGEVSK), 115–119 (GVVGD), 139–140 (TS), Lys152, and Lys161. Residues Glu194, His256, and His274 each coordinate Zn(2+).

Belongs to the sugar phosphate cyclases superfamily. Dehydroquinate synthase family. Co(2+) is required as a cofactor. Requires Zn(2+) as cofactor. NAD(+) serves as cofactor.

The protein localises to the cytoplasm. It catalyses the reaction 7-phospho-2-dehydro-3-deoxy-D-arabino-heptonate = 3-dehydroquinate + phosphate. It participates in metabolic intermediate biosynthesis; chorismate biosynthesis; chorismate from D-erythrose 4-phosphate and phosphoenolpyruvate: step 2/7. Functionally, catalyzes the conversion of 3-deoxy-D-arabino-heptulosonate 7-phosphate (DAHP) to dehydroquinate (DHQ). The polypeptide is 3-dehydroquinate synthase (Nitrobacter hamburgensis (strain DSM 10229 / NCIMB 13809 / X14)).